A 223-amino-acid chain; its full sequence is SCMKAAPMKEVSIRGQGSLAYPGLWTQGNLETLSGPNDATRGLTSLADTFEHVIEELLDEQQVVQPSKENKDADLYSSRVMLSSQVPLEPPLLFLLEEYKNYLDAANMSMRVRRHSDPARRGELSVCDSISEWVTAAEKKTAVDMSGATVTVLEKVPVPKGQLKQYFYETKCSSKGYAKEGCRGIDKRYWNSQCRTTQSYVRALTMDNKKRVGWRFIRIDTSC.

Positions 1–5 (SCMKA) are cleaved as a signal peptide. Positions 6–114 (APMKEVSIRG…AANMSMRVRR (109 aa)) are excised as a propeptide. An N-linked (GlcNAc...) asparagine glycan is attached at Asn107. 2 disulfides stabilise this stretch: Cys127/Cys194 and Cys172/Cys223.

The protein belongs to the NGF-beta family.

The protein resides in the secreted. Functionally, promotes the survival of neuronal populations that are all located either in the central nervous system or directly connected to it. This chain is Neurotrophic factor BDNF precursor form (BDNF), found in Lichanura trivirgata (Rosy boa).